We begin with the raw amino-acid sequence, 285 residues long: Nucleotide-binding protein PSPPH_4154 (285 aa).

8–15 (GRSGSGKS) serves as a coordination point for ATP. 60 to 63 (DARN) is a binding site for GTP.

It belongs to the RapZ-like family.

Its function is as follows. Displays ATPase and GTPase activities. The protein is Nucleotide-binding protein PSPPH_4154 of Pseudomonas savastanoi pv. phaseolicola (strain 1448A / Race 6) (Pseudomonas syringae pv. phaseolicola (strain 1448A / Race 6)).